The chain runs to 338 residues: Lipoate-protein ligase A (338 aa).

The BPL/LPL catalytic domain maps to 29–216 (SPDQRVLFLW…AFFNYYDEKV (188 aa)). ATP contacts are provided by residues Arg71, 76–79 (GAVF), and Lys134. Lys134 is a (R)-lipoate binding site.

Belongs to the LplA family. Monomer.

The protein resides in the cytoplasm. The catalysed reaction is L-lysyl-[lipoyl-carrier protein] + (R)-lipoate + ATP = N(6)-[(R)-lipoyl]-L-lysyl-[lipoyl-carrier protein] + AMP + diphosphate + H(+). It functions in the pathway protein modification; protein lipoylation via exogenous pathway; protein N(6)-(lipoyl)lysine from lipoate: step 1/2. The protein operates within protein modification; protein lipoylation via exogenous pathway; protein N(6)-(lipoyl)lysine from lipoate: step 2/2. In terms of biological role, catalyzes both the ATP-dependent activation of exogenously supplied lipoate to lipoyl-AMP and the transfer of the activated lipoyl onto the lipoyl domains of lipoate-dependent enzymes. This is Lipoate-protein ligase A from Yersinia enterocolitica serotype O:8 / biotype 1B (strain NCTC 13174 / 8081).